The sequence spans 424 residues: Calreticulin-2 (424 aa).

An N-terminal signal peptide occupies residues 1–22 (MAKMIPSLVSLILIGLVAIASA). An N-linked (GlcNAc...) asparagine glycan is attached at Asn59. A disulfide bridge links Cys108 with Cys140. Residues Tyr112, Lys114, Tyr131, and Asp138 each contribute to the an alpha-D-glucoside site. 7 tandem repeats follow at residues 194–205 (KQTGSLYSDWDL), 213–224 (DPSAKKPEDWDE), 230–241 (DPEDKKPDGYDD), 248–259 (DTDSKKPEDWDD), 263–273 (GEWTAPTIPNP), 277–287 (GEWKPKQIKNP), and 291–301 (GKWEAPLIDNP). A 4 X approximate repeats region spans residues 194–259 (KQTGSLYSDW…DSKKPEDWDD (66 aa)). Residues 210-220 (KIKDPSAKKPE) show a composition bias toward basic and acidic residues. The segment at 210 to 279 (KIKDPSAKKP…IPNPEYMGEW (70 aa)) is disordered. Positions 221 to 230 (DWDEQEYISD) are enriched in acidic residues. The segment covering 231–255 (PEDKKPDGYDDIPKEIPDTDSKKPE) has biased composition (basic and acidic residues). Residues 263–301 (GEWTAPTIPNPEYMGEWKPKQIKNPNYKGKWEAPLIDNP) form a 3 X approximate repeats region. An alpha-D-glucoside is bound at residue Glu321. The span at 362–378 (FDEAEKKNEEEESKDAP) shows a compositional bias: basic and acidic residues. The disordered stretch occupies residues 362–424 (FDEAEKKNEE…EKDATAHDEL (63 aa)). Over residues 379–397 (AESDAEDEPEDDEGGDDSD) the composition is skewed to acidic residues. Residues Ser381 and Ser396 each carry the phosphoserine modification. A compositionally biased stretch (basic and acidic residues) spans 398–424 (SESKAEETKSVDSEETSEKDATAHDEL). A Prevents secretion from ER motif is present at residues 421–424 (HDEL).

It belongs to the calreticulin family.

It is found in the endoplasmic reticulum lumen. In terms of biological role, molecular calcium-binding chaperone promoting folding, oligomeric assembly and quality control in the ER via the calreticulin/calnexin cycle. This lectin may interact transiently with almost all of the monoglucosylated glycoproteins that are synthesized in the ER. In Arabidopsis thaliana (Mouse-ear cress), this protein is Calreticulin-2 (CRT2).